We begin with the raw amino-acid sequence, 101 residues long: Urease subunit beta (101 aa).

This sequence belongs to the urease beta subunit family. As to quaternary structure, heterotrimer of UreA (gamma), UreB (beta) and UreC (alpha) subunits. Three heterotrimers associate to form the active enzyme.

Its subcellular location is the cytoplasm. It carries out the reaction urea + 2 H2O + H(+) = hydrogencarbonate + 2 NH4(+). Its pathway is nitrogen metabolism; urea degradation; CO(2) and NH(3) from urea (urease route): step 1/1. The polypeptide is Urease subunit beta (Bradyrhizobium sp. (strain BTAi1 / ATCC BAA-1182)).